Here is a 564-residue protein sequence, read N- to C-terminus: Alpha-farnesene synthase (564 aa).

Mg(2+)-binding residues include D313, D317, T464, and E468. The DDXXD motif motif lies at 313-317 (DDVYD).

Belongs to the terpene synthase family. Mg(2+) is required as a cofactor.

It carries out the reaction (2E,6E)-farnesyl diphosphate = (3E,6E)-alpha-farnesene + diphosphate. Catalyzes the cyclization of farnesyl diphosphate to (E,E)-alpha-farnesene. The polypeptide is Alpha-farnesene synthase (TPS7) (Ricinus communis (Castor bean)).